Consider the following 218-residue polypeptide: Ribonuclease S-7 (218 aa).

Positions 1-22 are cleaved as a signal peptide; sequence MLNSPLTSVLFVLLFVLSPIYG. Glutamine 32 is a binding site for RNA. A disulfide bridge links cysteine 38 with cysteine 43. N-linked (GlcNAc...) asparagine glycosylation occurs at asparagine 49. RNA is bound at residue histidine 53. Histidine 53 (proton donor) is an active-site residue. N-linked (GlcNAc...) asparagine glycosylation is present at asparagine 59. Cysteines 67 and 116 form a disulfide. Residues 91–92, phenylalanine 105, 108–109, and 112–113 each bind RNA; these read DL, HE, and KH. Glutamate 109 is a catalytic residue. Histidine 113 (proton acceptor) is an active-site residue. N-linked (GlcNAc...) asparagine glycosylation is present at asparagine 162. Disulfide bonds link cysteine 177-cysteine 207 and cysteine 190-cysteine 201.

Belongs to the RNase T2 family.

It is found in the secreted. It localises to the extracellular space. The enzyme catalyses a ribonucleotidyl-ribonucleotide-RNA + H2O = a 3'-end 3'-phospho-ribonucleotide-RNA + a 5'-end dephospho-ribonucleoside-RNA + H(+). In terms of biological role, self-incompatibility (SI) is the inherited ability of a flowering plant to prevent self-fertilization by discriminating between self and non-self pollen during pollination. In many species of the Solanaceae, self-incompatibility is controlled by the single, multiallelic locus S. This stylar glycoprotein is associated with expression of self-incompatibility in potato. This is Ribonuclease S-7 from Nicotiana alata (Winged tobacco).